The chain runs to 338 residues: L-serine dehydratase (338 aa).

Lys39 bears the N6-(pyridoxal phosphate)lysine mark.

It belongs to the serine/threonine dehydratase family. Pyridoxal 5'-phosphate serves as cofactor.

The protein localises to the cytoplasm. The enzyme catalyses L-serine = pyruvate + NH4(+). The protein operates within carbohydrate biosynthesis; gluconeogenesis. The chain is L-serine dehydratase (SDL1) from Saccharomyces cerevisiae (strain YJM789) (Baker's yeast).